We begin with the raw amino-acid sequence, 218 residues long: Octanoyltransferase (218 aa).

The BPL/LPL catalytic domain occupies 34 to 209; sequence ETSRDELWIV…TFSQELGYQH (176 aa). Substrate-binding positions include 73 to 80, 140 to 142, and 153 to 155; these read RGGQVTYH, SLG, and GLA. Cys-171 functions as the Acyl-thioester intermediate in the catalytic mechanism.

Belongs to the LipB family.

Its subcellular location is the cytoplasm. The enzyme catalyses octanoyl-[ACP] + L-lysyl-[protein] = N(6)-octanoyl-L-lysyl-[protein] + holo-[ACP] + H(+). Its pathway is protein modification; protein lipoylation via endogenous pathway; protein N(6)-(lipoyl)lysine from octanoyl-[acyl-carrier-protein]: step 1/2. Its function is as follows. Catalyzes the transfer of endogenously produced octanoic acid from octanoyl-acyl-carrier-protein onto the lipoyl domains of lipoate-dependent enzymes. Lipoyl-ACP can also act as a substrate although octanoyl-ACP is likely to be the physiological substrate. The polypeptide is Octanoyltransferase (Shewanella loihica (strain ATCC BAA-1088 / PV-4)).